A 214-amino-acid chain; its full sequence is Cell division protein SepF (214 aa).

Residues 23–70 (YYDDRAPSRGFPRPRFDDGYGRYDGDDYDDPRREPADCPPPAGYRGGY) are disordered. Residues 36 to 58 (PRFDDGYGRYDGDDYDDPRREPA) show a composition bias toward basic and acidic residues.

Belongs to the SepF family. In terms of assembly, homodimer. Interacts with FtsZ.

It is found in the cytoplasm. In terms of biological role, cell division protein that is part of the divisome complex and is recruited early to the Z-ring. Probably stimulates Z-ring formation, perhaps through the cross-linking of FtsZ protofilaments. Its function overlaps with FtsA. This is Cell division protein SepF from Mycolicibacterium paratuberculosis (strain ATCC BAA-968 / K-10) (Mycobacterium paratuberculosis).